Consider the following 231-residue polypeptide: UPF0758 protein pc1765 (231 aa).

In terms of domain architecture, MPN spans 107 to 229 (LIEHSSHAYQ…YVSFKDQNLL (123 aa)). 3 residues coordinate Zn(2+): histidine 178, histidine 180, and aspartate 191. The short motif at 178 to 191 (HNHPSGDPMPSNQD) is the JAMM motif element.

Belongs to the UPF0758 family.

In Protochlamydia amoebophila (strain UWE25), this protein is UPF0758 protein pc1765.